The following is an 86-amino-acid chain: Insulin (86 aa).

3 disulfides stabilise this stretch: C7-C72, C19-C85, and C71-C76. A propeptide spans 33–63 (ELEDPQVGQADPGVVPEAGRLQPLALEMTLQ) (c peptide).

Belongs to the insulin family. Heterodimer of a B chain and an A chain linked by two disulfide bonds.

It localises to the secreted. Its function is as follows. Insulin decreases blood glucose concentration. It increases cell permeability to monosaccharides, amino acids and fatty acids. It accelerates glycolysis, the pentose phosphate cycle, and glycogen synthesis in liver. In Chinchilla chinchilla (Short-tailed chinchilla), this protein is Insulin (INS).